Reading from the N-terminus, the 565-residue chain is Oxygen-dependent choline dehydrogenase (565 aa).

Residue 7–36 participates in FAD binding; that stretch reads DYIICGAGSAGNVLATRLTEDPGVTVLLLE. The active-site Proton acceptor is the His474.

It belongs to the GMC oxidoreductase family. FAD is required as a cofactor.

It carries out the reaction choline + A = betaine aldehyde + AH2. It catalyses the reaction betaine aldehyde + NAD(+) + H2O = glycine betaine + NADH + 2 H(+). The protein operates within amine and polyamine biosynthesis; betaine biosynthesis via choline pathway; betaine aldehyde from choline (cytochrome c reductase route): step 1/1. Involved in the biosynthesis of the osmoprotectant glycine betaine. Catalyzes the oxidation of choline to betaine aldehyde and betaine aldehyde to glycine betaine at the same rate. The polypeptide is Oxygen-dependent choline dehydrogenase (Burkholderia pseudomallei (strain 1710b)).